The chain runs to 24 residues: Humanin-like 10 (24 aa).

This sequence belongs to the humanin family. Expressed in mature brain, thyroid gland and testis.

The protein localises to the secreted. Its subcellular location is the cytoplasm. In terms of biological role, plays a role as a neuroprotective and antiapoptotic factor. The chain is Humanin-like 10 from Homo sapiens (Human).